The primary structure comprises 614 residues: Zinc finger and SCAN domain-containing protein 2 (614 aa).

Disordered regions lie at residues 1–26 and 43–76; these read MMAA…EDRQ and EAVL…PQGA. The 74-residue stretch at 59 to 132 folds into the SCAN box domain; the sequence is SAGKGGPQEE…ALVEDLTQTL (74 aa). 14 consecutive C2H2-type zinc fingers follow at residues 222 to 244, 250 to 272, 278 to 300, 306 to 328, 334 to 356, 362 to 384, 390 to 412, 418 to 440, 446 to 468, 474 to 496, 502 to 524, 530 to 552, 558 to 580, and 586 to 608; these read YECP…ERTH, YKCD…QTTH, YKCR…QRIH, FQCA…QRTH, YSCP…QGIH, YECK…QRIH, YKCT…RRTH, YQCS…RRTH, YKCG…QGMH, YECL…QRIH, YKCS…QRTH, YKCL…QRAH, YRCP…QRIH, and YKCP…QRTH.

The protein belongs to the krueppel C2H2-type zinc-finger protein family.

The protein resides in the nucleus. In terms of biological role, may be involved in transcriptional regulation during the post-meiotic stages of spermatogenesis. This is Zinc finger and SCAN domain-containing protein 2 (ZSCAN2) from Homo sapiens (Human).